The sequence spans 68 residues: Conotoxin Lt5.11 (68 aa).

An N-terminal signal peptide occupies residues 1-19 (MLCLPVFIILLLLASPAAP). Residues 20–54 (KSLETRIQNDLIRAGLTDADLKTEKGFLSGLLNVA) constitute a propeptide that is removed on maturation.

It belongs to the conotoxin T superfamily. In terms of processing, contains 2 disulfide bonds that can be either 'C1-C3, C2-C4' or 'C1-C4, C2-C3', since these disulfide connectivities have been observed for conotoxins with cysteine framework V (for examples, see AC P0DQQ7 and AC P81755). As to expression, expressed by the venom duct.

The protein resides in the secreted. This is Conotoxin Lt5.11 from Conus litteratus (Lettered cone).